The sequence spans 185 residues: Ribosome-recycling factor (185 aa).

The protein belongs to the RRF family.

It localises to the cytoplasm. Its function is as follows. Responsible for the release of ribosomes from messenger RNA at the termination of protein biosynthesis. May increase the efficiency of translation by recycling ribosomes from one round of translation to another. In Nocardia farcinica (strain IFM 10152), this protein is Ribosome-recycling factor.